Reading from the N-terminus, the 50-residue chain is Protein PsbN (50 aa).

A helical membrane pass occupies residues 14 to 34 (VAVTILAVLLALTGFGLWTAF).

Belongs to the PsbN family.

The protein resides in the cellular thylakoid membrane. In terms of biological role, may play a role in photosystem I and II biogenesis. The chain is Protein PsbN from Prochlorococcus marinus subsp. pastoris (strain CCMP1986 / NIES-2087 / MED4).